Consider the following 209-residue polypeptide: MSKGLLISIEGPDGAGKTSVLKVLLPRLREVYPAQVITTREPGGVAIAEQIREVILDIDNTAMDAKTELLLYIAARRQHLVEKVLPELENGNMVIMDRFIDSSVAYQGAGRGLDQDEVAWLNNYATDGHKPDLTLLFDVDSETGLARIAANGEREVNRLDLEKLDMHQRVRQGYLDLAEAEPERIKRIDASQTLEEVVEDTWEIIKSYL.

Residue 11–18 (GPDGAGKT) participates in ATP binding.

This sequence belongs to the thymidylate kinase family.

The enzyme catalyses dTMP + ATP = dTDP + ADP. Its function is as follows. Phosphorylation of dTMP to form dTDP in both de novo and salvage pathways of dTTP synthesis. This Streptococcus thermophilus (strain ATCC BAA-250 / LMG 18311) protein is Thymidylate kinase.